A 212-amino-acid chain; its full sequence is External core antigen (212 aa).

The N-terminal stretch at 1 to 19 (MQLFHLCLIISCTCPTVQA) is a signal peptide. An HBEAG region spans residues 25 to 27 (GWL). A disordered region spans residues 165 to 212 (NAPILSTLPETTVVRRRGRSPRRRTPSPRRRRSQSPRRRRSQSRESQC). The segment covering 178–205 (VRRRGRSPRRRTPSPRRRRSQSPRRRRS) has biased composition (basic residues). The stretch at 184–190 (SPRRRTP) is one 1; half-length repeat. The interval 184 to 206 (SPRRRTPSPRRRRSQSPRRRRSQ) is 3 X 8 AA repeats of S-P-R-R-R-R-S-Q. Positions 184-212 (SPRRRTPSPRRRRSQSPRRRRSQSRESQC) are excised as a propeptide. Tandem repeats lie at residues 191-198 (SPRRRRSQ) and 199-206 (SPRRRRSQ).

The protein belongs to the orthohepadnavirus precore antigen family. In terms of assembly, homodimerizes. In terms of processing, phosphorylated. Cleaved by host furin.

It is found in the secreted. It localises to the host nucleus. In terms of biological role, may regulate immune response to the intracellular capsid in acting as a T-cell tolerogen, by having an immunoregulatory effect which prevents destruction of infected cells by cytotoxic T-cells. This immune regulation may predispose to chronicity during perinatal infections and prevent severe liver injury during adult infections. The chain is External core antigen from Hepatitis B virus genotype D subtype ayw (isolate Italy/CI/1992) (HBV-D).